A 90-amino-acid chain; its full sequence is SAGA-associated factor 11 (90 aa).

The SGF11-type zinc finger occupies 63–84 (FSCDNCGRKIAGGRFAQHINKC).

Belongs to the SGF11 family. In terms of assembly, component of the 1.8 MDa SAGA transcription coactivator-HAT complex. SAGA is built of 5 distinct domains with specialized functions. Within the SAGA complex, SUS1, SGF11, SGF73 and UBP8 form an additional subcomplex of SAGA called the DUB module (deubiquitination module). Interacts directly with SGF73, SUS1 and UBP8.

The protein localises to the nucleus. Functions as a component of the transcription regulatory histone acetylation (HAT) complex SAGA. At the promoters, SAGA is required for recruitment of the basal transcription machinery. It influences RNA polymerase II transcriptional activity through different activities such as TBP interaction and promoter selectivity, interaction with transcription activators, and chromatin modification through histone acetylation and deubiquitination. SAGA acetylates nucleosomal histone H3 to some extent (to form H3K9ac, H3K14ac, H3K18ac and H3K23ac). SAGA interacts with DNA via upstream activating sequences (UASs). Involved in transcriptional regulation of a subset of SAGA-regulated genes. Within the SAGA complex, participates in a subcomplex, that specifically deubiquitinates histones H2B. The polypeptide is SAGA-associated factor 11 (Lodderomyces elongisporus (strain ATCC 11503 / CBS 2605 / JCM 1781 / NBRC 1676 / NRRL YB-4239) (Yeast)).